A 637-amino-acid polypeptide reads, in one-letter code: Probable potassium transport system protein Kup (637 aa).

Helical transmembrane passes span 24 to 44, 64 to 84, 113 to 133, 151 to 171, 182 to 202, 225 to 245, 261 to 281, 290 to 310, 351 to 371, 381 to 401, 409 to 429, and 433 to 453; these read LAIAAIGVVFGDIGTSPLYAL, VISLLFWAIILVVGIKYLLFV, AGALMALGIFGACMFYGDAVI, PHLSHLVLPITIVILIALFWI, LFGPIMVVWFVVIAALGVYHI, LLQAYVVLGSVVLVLTGAEAL, AYGLVMPSLVLNYFGQGALLI, PFFLLAPEWALLPLVVLSTVA, IYVPVVNWLLLFVILCIVIGF, YGIAVTATMVITTVLACVVMV, LLVGAIIAIFLAIDLGFFGAN, and VAQGGWLPLGIGALLFFLLMT.

This sequence belongs to the HAK/KUP transporter (TC 2.A.72) family.

Its subcellular location is the cell inner membrane. The enzyme catalyses K(+)(in) + H(+)(in) = K(+)(out) + H(+)(out). Its function is as follows. Transport of potassium into the cell. Likely operates as a K(+):H(+) symporter. This Burkholderia ambifaria (strain MC40-6) protein is Probable potassium transport system protein Kup.